The chain runs to 480 residues: Adenosylhomocysteinase (480 aa).

Substrate contacts are provided by threonine 63, aspartate 142, and glutamate 203. 204–206 serves as a coordination point for NAD(+); the sequence is TTT. Lysine 233 and aspartate 237 together coordinate substrate. NAD(+) contacts are provided by residues asparagine 238, 267–272, glutamate 290, asparagine 325, 346–348, and asparagine 394; these read GYGDVG and IGH.

Belongs to the adenosylhomocysteinase family. It depends on NAD(+) as a cofactor.

The protein localises to the cytoplasm. It catalyses the reaction S-adenosyl-L-homocysteine + H2O = L-homocysteine + adenosine. The protein operates within amino-acid biosynthesis; L-homocysteine biosynthesis; L-homocysteine from S-adenosyl-L-homocysteine: step 1/1. Functionally, may play a key role in the regulation of the intracellular concentration of adenosylhomocysteine. The protein is Adenosylhomocysteinase of Xanthomonas oryzae pv. oryzae (strain PXO99A).